Here is a 334-residue protein sequence, read N- to C-terminus: Malate dehydrogenase (334 aa).

Position 16–22 (16–22) interacts with NAD(+); the sequence is GAAGQIA. Positions 97 and 103 each coordinate substrate. Residues Asn-110, Gln-117, and 134–136 each bind NAD(+); that span reads VGN. Substrate is bound by residues Asn-136 and Arg-167. His-192 functions as the Proton acceptor in the catalytic mechanism.

It belongs to the LDH/MDH superfamily. MDH type 2 family.

It catalyses the reaction (S)-malate + NAD(+) = oxaloacetate + NADH + H(+). Its function is as follows. Catalyzes the reversible oxidation of malate to oxaloacetate. In Nocardia farcinica (strain IFM 10152), this protein is Malate dehydrogenase.